The following is a 181-amino-acid chain: Large ribosomal subunit protein uL16 (181 aa).

This sequence belongs to the universal ribosomal protein uL16 family.

The protein is Large ribosomal subunit protein uL16 of Pyrococcus abyssi (strain GE5 / Orsay).